The sequence spans 410 residues: Phosphoglycerate kinase (410 aa).

Substrate-binding positions include 19–21, Arg34, 57–60, Arg114, and Arg154; these read DLN and HQGK. Residues Glu332 and 358 to 361 each bind ATP; that span reads GGHS.

Belongs to the phosphoglycerate kinase family. In terms of assembly, homodimer.

The protein localises to the cytoplasm. The enzyme catalyses (2R)-3-phosphoglycerate + ATP = (2R)-3-phospho-glyceroyl phosphate + ADP. It participates in carbohydrate degradation; glycolysis; pyruvate from D-glyceraldehyde 3-phosphate: step 2/5. This Pyrococcus abyssi (strain GE5 / Orsay) protein is Phosphoglycerate kinase (pgk).